Reading from the N-terminus, the 506-residue chain is ATP-dependent rRNA helicase RRP3 (506 aa).

Disordered stretches follow at residues 1–22 and 37–88; these read MSGK…KSKE and NQKK…FESF. The span at 49–69 shows a compositional bias: acidic residues; the sequence is SDQEDDPSESEEEEGSDSEDV. Residues 86 to 114 carry the Q motif motif; that stretch reads ESFSDLDLVPELIEACKNLNFAKPTPIQA. One can recognise a Helicase ATP-binding domain in the interval 117–289; the sequence is IPPALQGHDI…RASLTNPVKC (173 aa). 130–137 contacts ATP; sequence AQTGSGKT. The short motif at 236-239 is the DEAD box element; sequence DEAD. The Helicase C-terminal domain occupies 312 to 460; the sequence is LKNTYLIYLM…KENVNKDAIL (149 aa). A disordered region spans residues 485–506; the sequence is IARGKGRRGRMAARDDMDKGER. Over residues 496–506 the composition is skewed to basic and acidic residues; sequence AARDDMDKGER.

The protein belongs to the DEAD box helicase family. DDX47/RRP3 subfamily. As to quaternary structure, interacts with the SSU processome.

The protein localises to the nucleus. The catalysed reaction is ATP + H2O = ADP + phosphate + H(+). In terms of biological role, ATP-dependent rRNA helicase required for pre-ribosomal RNA processing. Involved in the maturation of the 35S-pre-rRNA and to its cleavage to mature 18S rRNA. The protein is ATP-dependent rRNA helicase RRP3 of Vanderwaltozyma polyspora (strain ATCC 22028 / DSM 70294 / BCRC 21397 / CBS 2163 / NBRC 10782 / NRRL Y-8283 / UCD 57-17) (Kluyveromyces polysporus).